A 366-amino-acid polypeptide reads, in one-letter code: IgG receptor FcRn large subunit p51 (366 aa).

The signal sequence occupies residues 1-22 (MGMSQPGVLLSLLLVLLPQTWG). An alpha-1 region spans residues 23–111 (AEPRLPLMYH…RTLENQINGT (89 aa)). Residues 23–298 (AEPRLPLMYH…VDLDSPARSS (276 aa)) lie on the Extracellular side of the membrane. 4 N-linked (GlcNAc...) asparagine glycosylation sites follow: Asn109, Asn126, Asn150, and Asn247. An alpha-2 region spans residues 112 to 201 (FTLQGLLGCE…ERGRQNLEWK (90 aa)). 2 disulfide bridges follow: Cys120/Cys183 and Cys222/Cys276. The alpha-3 stretch occupies residues 202-291 (EPPSMRLKAR…GLAQPLTVDL (90 aa)). One can recognise an Ig-like C1-type domain in the interval 203–290 (PPSMRLKARP…EGLAQPLTVD (88 aa)). Positions 293–298 (SPARSS) are connecting peptide. The chain crosses the membrane as a helical span at residues 299–322 (VPVVGIILGLLLVVVAIAGGVLLW). Over 323 to 366 (NRMRSGLPAPWLSLSGDDSGDLLPGGNLPPEAEPQGVNAFPATS) the chain is Cytoplasmic. A Phosphoserine modification is found at Ser335. A disordered region spans residues 344–366 (LLPGGNLPPEAEPQGVNAFPATS).

This sequence belongs to the immunoglobulin superfamily. As to quaternary structure, fcRn complex consists of two subunits: p51, and p14 which is equivalent to beta-2-microglobulin. It forms an MHC class I-like heterodimer. Interacts with albumin/ALB; this interaction regulates ALB homeostasis. As to expression, intestinal epithelium.

It localises to the cell membrane. The protein resides in the endosome membrane. Functionally, cell surface receptor that transfers passive humoral immunity from the mother to the newborn. Binds to the Fc region of monomeric immunoglobulin gamma and mediates its selective uptake from milk. IgG in the milk is bound at the apical surface of the intestinal epithelium. The resultant FcRn-IgG complexes are transcytosed across the intestinal epithelium and IgG is released from FcRn into blood or tissue fluids. Throughout life, contributes to effective humoral immunity by recycling IgG and extending its half-life in the circulation. Mechanistically, monomeric IgG binding to FcRn in acidic endosomes of endothelial and hematopoietic cells recycles IgG to the cell surface where it is released into the circulation. In addition of IgG, regulates homeostasis of the other most abundant circulating protein albumin/ALB. This chain is IgG receptor FcRn large subunit p51 (Fcgrt), found in Rattus norvegicus (Rat).